Here is a 190-residue protein sequence, read N- to C-terminus: Threonylcarbamoyl-AMP synthase (190 aa).

The region spanning 7-190 is the YrdC-like domain; sequence TGSIAAVVDL…ALTGELFRQG (184 aa).

Belongs to the SUA5 family. TsaC subfamily.

It localises to the cytoplasm. It catalyses the reaction L-threonine + hydrogencarbonate + ATP = L-threonylcarbamoyladenylate + diphosphate + H2O. In terms of biological role, required for the formation of a threonylcarbamoyl group on adenosine at position 37 (t(6)A37) in tRNAs that read codons beginning with adenine. Catalyzes the conversion of L-threonine, HCO(3)(-)/CO(2) and ATP to give threonylcarbamoyl-AMP (TC-AMP) as the acyladenylate intermediate, with the release of diphosphate. The chain is Threonylcarbamoyl-AMP synthase from Salmonella paratyphi A (strain ATCC 9150 / SARB42).